A 2472-amino-acid polypeptide reads, in one-letter code: Spectrin alpha chain, non-erythrocytic 1 (2472 aa).

Position 1 is an N-acetylmethionine (Met-1). Spectrin repeat units follow at residues 45–146 (RFQF…IKLL), 150–251 (KLVQ…QGKL), 256–358 (EVQR…ARLD), 361–465 (YRLQ…QYEQ), 468–570 (DLQL…AQLA), 574–676 (HLQQ…KLRE), 679–781 (QQQQ…QKLA), 785–888 (RLQQ…DLED), and 891–961 (QAQQ…QQVA). A Phosphoserine modification is found at Ser-587. At Lys-637 the chain carries N6-acetyllysine. Residue Lys-803 is modified to N6-acetyllysine. 6 positions are modified to phosphoserine: Ser-924, Ser-982, Ser-999, Ser-1029, Ser-1031, and Ser-1041. Residues 967–1026 (TGKELVLALYDYQEKSPREVTMKKGDILTLLNSTNKDWWKVEVNDRQGFVPAAYVKKLDP) enclose the SH3 domain. One copy of the Spectrin 10 repeat lies at 1096-1166 (LFREANELQQ…LESEGLMAEE (71 aa)). Tyr-1176 is modified (phosphotyrosine). 7 positions are modified to phosphoserine: Ser-1190, Ser-1207, Ser-1217, Ser-1291, Ser-1306, Ser-1323, and Ser-1338. The stretch at 1233-1336 (HEVQRFHRDA…RADQRKAKLG (104 aa)) is one Spectrin 11 repeat. 2 Spectrin repeats span residues 1339–1441 (HDLQ…RMML) and 1446–1549 (ELQL…KLGE). Lys-1519 carries the post-translational modification N6-acetyllysine. Phosphoserine occurs at positions 1550, 1557, 1578, 1615, and 1647. Spectrin repeat units lie at residues 1552–1656 (TLQQ…KLKE), 1659–1762 (KQQN…KLSE), 1764–1868 (HRLH…RLEE), 1871–1974 (EYQQ…KLDE), 1978–2081 (FLQF…KLLE), 2092–2194 (LFLT…LELQ), and 2206–2310 (LRQE…NLEQ). Thr-2020 is modified (phosphothreonine). Position 2052 is an N6-acetyllysine (Lys-2052). Thr-2066 bears the Phosphothreonine mark. EF-hand domains follow at residues 2323–2358 (EALKEFSMMFKHFDKDKSGRLNHQEFKSCLRSLGYD), 2366–2401 (EPDPEFEAILDTVDPNRDGHVSLQEYMAFMISRETE), and 2404–2439 (KSSEEIESAFRALSSEGKPYVTKEELYQNLTREQAD). Ca(2+)-binding residues include Asp-2336, Asp-2338, Ser-2340, Arg-2342, Glu-2347, Asp-2379, Asn-2381, Asp-2383, His-2385, and Glu-2390. Lys-2421 carries the post-translational modification N6-acetyllysine.

It belongs to the spectrin family. As to quaternary structure, like erythrocyte spectrin, the spectrin-like proteins are capable of forming dimers which can further associate to tetramers. Interacts (via C-terminal spectrin repeats) with TRPC4. Interacts with CALM and EMD. Interacts with isoform 1 of ACP1. Identified in a complex with ACTN4, CASK, IQGAP1, MAGI2, NPHS1 and SPTBN1. Interacts with SHANK3 (via ANK repeats). Interacts with CLN3; this interaction regulates the fodrin localization at the plasma membrane. Phosphorylation of Tyr-1176 decreases sensitivity to cleavage by calpain in vitro.

Its subcellular location is the cytoplasm. The protein resides in the cytoskeleton. It is found in the cell cortex. Its function is as follows. Fodrin, which seems to be involved in secretion, interacts with calmodulin in a calcium-dependent manner and is thus candidate for the calcium-dependent movement of the cytoskeleton at the membrane. The chain is Spectrin alpha chain, non-erythrocytic 1 (Sptan1) from Mus musculus (Mouse).